Here is a 1320-residue protein sequence, read N- to C-terminus: Inner centromere protein A (1320 aa).

5 disordered regions span residues 53–75, 426–447, 611–679, 701–877, and 896–1215; these read KNSN…NNIS, QEKQ…QPVV, NEPI…VVPP, EEEE…NTAS, and TKSP…DGDE. 3 stretches are compositionally biased toward low complexity: residues 54–75, 429–447, and 615–640; these read NSNY…NNIS, QQQQ…QPVV, and QQPS…SSSS. A coiled-coil region spans residues 221 to 444; it reads QQNQFQEQHK…KQQEKQQQQQ (224 aa). Polar residues predominate over residues 653 to 668; the sequence is TIVTSKPTNKVQPQSL. The segment covering 669 to 679 has biased composition (low complexity); sequence NSNINNNVVPP. Residues 683–855 adopt a coiled-coil conformation; the sequence is AAIANKLKKQ…QKKKTVQTIL (173 aa). A compositionally biased stretch (basic and acidic residues) spans 701–835; it reads EEEERLRKKQ…QEKEKQEKQK (135 aa). Positions 851 to 863 are enriched in polar residues; that stretch reads VQTILPTPQTPSR. Low complexity predominate over residues 864–877; that stretch reads SANNNYDDAANTAS. 2 stretches are compositionally biased toward acidic residues: residues 908-926 and 934-951; these read DDQD…ENSE and QDDS…DSDE. The segment covering 965–977 has biased composition (low complexity); it reads NKNKNSNNSNNNN. Residues 981-1000 are compositionally biased toward basic and acidic residues; that stretch reads QSRKDKSIVFDSDSLNRNHN. Composition is skewed to low complexity over residues 1026–1040 and 1047–1061; these read SNMK…YSNS and SPPS…SSES. Residues 1062–1071 show a composition bias toward polar residues; sequence NDCFSPLTPT. Over residues 1072–1096 the composition is skewed to low complexity; it reads NNNKINNNKINNNNSNNNSFNNSNS. A compositionally biased stretch (polar residues) spans 1120 to 1136; it reads SKTSPFLTIRNTPSPLK. Positions 1143-1154 are enriched in low complexity; sequence NMSSASSLSSFD. Residues 1155–1170 are compositionally biased toward acidic residues; sequence SDNDSDYNDNDIDDGE. Positions 1175-1187 are enriched in polar residues; sequence PNENFTTPLKNQE. The segment covering 1188-1198 has biased composition (low complexity); that stretch reads NNNNNNSNNSN. A compositionally biased stretch (polar residues) spans 1199–1209; the sequence is TQYPIITSPPS.

It belongs to the INCENP family. Interacts with aurK.

It is found in the chromosome. The protein localises to the centromere. The protein resides in the cytoplasm. Its subcellular location is the cytoskeleton. It localises to the spindle. It is found in the nucleus. The protein localises to the cleavage furrow. Chromosomal passenger protein that seems to be required for chromosome segregation and the onset of cytokinesis during mitosis. Plays a key role in the abscission of daughter cells at the end of cytokinesis and in the establishment or maintenance of a bipolar spindle. This chain is Inner centromere protein A (icpA), found in Dictyostelium discoideum (Social amoeba).